We begin with the raw amino-acid sequence, 564 residues long: Type 2 DNA topoisomerase 6 subunit B (564 aa).

ATP-binding positions include asparagine 46, aspartate 78, 99 to 100 (TK), 109 to 116 (GQQGIGIS), and lysine 471.

The protein belongs to the TOP6B family. Homodimer. Heterotetramer of two Top6A and two Top6B chains.

It carries out the reaction ATP-dependent breakage, passage and rejoining of double-stranded DNA.. Functionally, relaxes both positive and negative superturns and exhibits a strong decatenase activity. This Pyrococcus horikoshii (strain ATCC 700860 / DSM 12428 / JCM 9974 / NBRC 100139 / OT-3) protein is Type 2 DNA topoisomerase 6 subunit B.